The following is a 31-amino-acid chain: Photosystem II reaction center protein T (31 aa).

A helical transmembrane segment spans residues 3–23 (SLVYIFVFVVALGVLFFAIAF).

It belongs to the PsbT family. In terms of assembly, PSII is composed of 1 copy each of membrane proteins PsbA, PsbB, PsbC, PsbD, PsbE, PsbF, PsbH, PsbI, PsbJ, PsbK, PsbL, PsbM, PsbT, PsbX, PsbY, PsbZ, Psb30/Ycf12, peripheral proteins PsbO, CyanoQ (PsbQ), PsbU, PsbV and a large number of cofactors. It forms dimeric complexes.

It localises to the cellular thylakoid membrane. Functionally, found at the monomer-monomer interface of the photosystem II (PS II) dimer, plays a role in assembly and dimerization of PSII. PSII is a light-driven water plastoquinone oxidoreductase, using light energy to abstract electrons from H(2)O, generating a proton gradient subsequently used for ATP formation. This Synechococcus elongatus (strain ATCC 33912 / PCC 7942 / FACHB-805) (Anacystis nidulans R2) protein is Photosystem II reaction center protein T.